Here is a 284-residue protein sequence, read N- to C-terminus: Probable sulfate transport system permease protein cysT (284 aa).

A run of 7 helical transmembrane segments spans residues 25 to 45 (AWALTLMYMLVSLILPIGALL), 75 to 95 (SALIAALLNGVFGLLIAWVLV), 107 to 127 (AAVDLPFALPTSVAGLTLATV), 145 to 165 (VAFTRLGVMLAMLFVSFPFVV), 194 to 214 (FLRVLCPPLMPAMMTGIALAF), 223 to 243 (SVVIVSGNIPFQDLIAPVLIF), and 255 to 275 (TVIGTVVLLISLTLLLAINWI). The ABC transmembrane type-1 domain maps to 69-272 (YAVTLSSALI…LISLTLLLAI (204 aa)).

It belongs to the binding-protein-dependent transport system permease family. CysTW subfamily.

It is found in the plastid. The protein resides in the chloroplast membrane. In terms of biological role, part of the ABC transporter complex cysAWTP (TC 3.A.1.6.1) involved in sulfate/thiosulfate import. Probably responsible for the translocation of the substrate across the membrane. In Nephroselmis olivacea (Green alga), this protein is Probable sulfate transport system permease protein cysT (cysT).